Consider the following 512-residue polypeptide: Probable anion transporter 3, chloroplastic (512 aa).

A chloroplast-targeting transit peptide spans 1–44; the sequence is MATVGSLKPLHHSSCSSSFPRNPIVNRKALLGFVFDSARKNQIR. Transmembrane regions (helical) follow at residues 102–124, 139–159, 167–187, 191–211, 228–248, 250–270, 324–344, 359–379, 396–416, 422–442, 462–482, and 486–506; these read VILT…VAVV, VVQS…GALV, VLAW…WAAA, LALL…MPSM, VGIS…LTPL, LSSI…LLWV, WAII…LSWM, AAWF…YAGA, KIMQ…LNFA, AAVF…GFLL, AGTL…QWLG, and AFLT…LLFA.

It belongs to the major facilitator superfamily. Sodium/anion cotransporter (TC 2.A.1.14) family. As to expression, expressed in roots.

The protein resides in the plastid. Its subcellular location is the chloroplast membrane. Its function is as follows. Inorganic phosphate and probable anion transporter. This Arabidopsis thaliana (Mouse-ear cress) protein is Probable anion transporter 3, chloroplastic (ANTR3).